Reading from the N-terminus, the 453-residue chain is Endoglucanase A (453 aa).

The signal sequence occupies residues 1–26 (MNCRKYLLSGLAVFGLAATSAVAALS). Catalysis depends on aspartate 82, which acts as the Nucleophile. The interval 115 to 126 (TTPTTRKPTTTP) is linker ('hinge') (Pro-Thr box). Histidine 417 is an active-site residue.

Belongs to the glycosyl hydrolase 9 (cellulase E) family. As to quaternary structure, monomer.

The protein localises to the periplasm. The catalysed reaction is Endohydrolysis of (1-&gt;4)-beta-D-glucosidic linkages in cellulose, lichenin and cereal beta-D-glucans.. High levels of endoglucanase activity detected on acid-swollen cellulose, ball-milled cellulose, and carboxymethyl cellulose; moderate levels detected on filter paper, phosphoric acid-swollen cellulose, lichenan, and xylan. This chain is Endoglucanase A (endA), found in Fibrobacter succinogenes (Bacteroides succinogenes).